Here is a 229-residue protein sequence, read N- to C-terminus: Putative N-acetylmannosamine-6-phosphate 2-epimerase (229 aa).

Belongs to the NanE family.

It catalyses the reaction an N-acyl-D-glucosamine 6-phosphate = an N-acyl-D-mannosamine 6-phosphate. It participates in amino-sugar metabolism; N-acetylneuraminate degradation; D-fructose 6-phosphate from N-acetylneuraminate: step 3/5. Converts N-acetylmannosamine-6-phosphate (ManNAc-6-P) to N-acetylglucosamine-6-phosphate (GlcNAc-6-P). This chain is Putative N-acetylmannosamine-6-phosphate 2-epimerase, found in Shigella dysenteriae serotype 1 (strain Sd197).